A 76-amino-acid polypeptide reads, in one-letter code: Conotoxin Gla(1)-TxVI (76 aa).

Positions 1 to 19 (MEKLTILLLVAAVLMSTQA) are cleaved as a signal peptide. A propeptide spanning residues 20–45 (LVERAGENHSKENINFLLKRKRAADR) is cleaved from the precursor. Tryptophan 48 carries the 6'-bromotryptophan modification. Glutamate 50 carries the 4-carboxyglutamate modification. Cystine bridges form between cysteine 51–cysteine 65, cysteine 58–cysteine 69, and cysteine 64–cysteine 73. At proline 61 the chain carries 4-hydroxyproline. 4-carboxyglutamate is present on residues glutamate 63, glutamate 67, and glutamate 70. Tryptophan 76 carries the post-translational modification 6'-bromotryptophan.

In terms of tissue distribution, expressed by the venom duct.

It localises to the secreted. This Conus textile (Cloth-of-gold cone) protein is Conotoxin Gla(1)-TxVI.